The following is a 144-amino-acid chain: Small ribosomal subunit protein eS10A (144 aa).

Residues 90–144 (THKRQVRPTAPRAGRPEPRERASADAGYRRAEKKDEGAAPSGFAPSFRGGFGRPQ) form a disordered region. The segment covering 103–126 (GRPEPRERASADAGYRRAEKKDEG) has biased composition (basic and acidic residues).

The protein belongs to the eukaryotic ribosomal protein eS10 family. In terms of assembly, component of the small ribosomal subunit (SSU). Mature yeast ribosomes consist of a small (40S) and a large (60S) subunit. The 40S small subunit contains 1 molecule of ribosomal RNA (18S rRNA) and at least 33 different proteins. The large 60S subunit contains 3 rRNA molecules (25S, 5.8S and 5S rRNA) and at least 46 different proteins. eS10 interacts with GCN1 (via middle region); this interaction is direct and promotes GCN2 kinase activity.

The protein resides in the cytoplasm. Its function is as follows. Component of the ribosome, a large ribonucleoprotein complex responsible for the synthesis of proteins in the cell. The small ribosomal subunit (SSU) binds messenger RNAs (mRNAs) and translates the encoded message by selecting cognate aminoacyl-transfer RNA (tRNA) molecules. The large subunit (LSU) contains the ribosomal catalytic site termed the peptidyl transferase center (PTC), which catalyzes the formation of peptide bonds, thereby polymerizing the amino acids delivered by tRNAs into a polypeptide chain. The nascent polypeptides leave the ribosome through a tunnel in the LSU and interact with protein factors that function in enzymatic processing, targeting, and the membrane insertion of nascent chains at the exit of the ribosomal tunnel. eS10 plays a role as a positive regulator of the GCN2 kinase activity by stimulating GCN1-mediated GCN2 activation. In Schizosaccharomyces pombe (strain 972 / ATCC 24843) (Fission yeast), this protein is Small ribosomal subunit protein eS10A (rps1001).